A 94-amino-acid chain; its full sequence is Large ribosomal subunit protein eL42 (94 aa).

Zn(2+) contacts are provided by C11, C14, C70, and C73. A C4-type zinc finger spans residues 11–73; the sequence is CPYCKKHTIH…IDLRFKCTEC (63 aa).

The protein belongs to the eukaryotic ribosomal protein eL42 family. In terms of assembly, part of the 50S ribosomal subunit. Zn(2+) is required as a cofactor.

Its function is as follows. Binds to the 23S rRNA. The protein is Large ribosomal subunit protein eL42 of Methanocaldococcus jannaschii (strain ATCC 43067 / DSM 2661 / JAL-1 / JCM 10045 / NBRC 100440) (Methanococcus jannaschii).